The primary structure comprises 302 residues: MLSMLESILLSVATSEAMLGILGNIFIVLVNCTNWVRNKKLSKINFILTGLAISRVFTIWIITLDAYTKVFFLTTLMPSNLHECISYIWVIINHLSVWFATSLSIFYFLKIANFSHYIFLWLKRRADKVFVFLIGYLIITWLASFPLAVTVIKNIKVHHNNTSWLIQLEKRELLINYVFANMGPISLFMVAVFTCFLLTISLWRHRRRMQSTGSKFRDLNTEVHVKAMKVLISFIILFILYFMGVLIETLCLFLTENILLFIFGFTLSSTYPCCHSFILILTSRELKQASMRALQRLKCCET.

The Extracellular portion of the chain corresponds to 1–7 (MLSMLES). The helical transmembrane segment at 8–28 (ILLSVATSEAMLGILGNIFIV) threads the bilayer. The Cytoplasmic portion of the chain corresponds to 29 to 43 (LVNCTNWVRNKKLSK). Residues 44-64 (INFILTGLAISRVFTIWIITL) form a helical membrane-spanning segment. Residues 65–87 (DAYTKVFFLTTLMPSNLHECISY) lie on the Extracellular side of the membrane. The chain crosses the membrane as a helical span at residues 88–108 (IWVIINHLSVWFATSLSIFYF). Topologically, residues 109-128 (LKIANFSHYIFLWLKRRADK) are cytoplasmic. The chain crosses the membrane as a helical span at residues 129–149 (VFVFLIGYLIITWLASFPLAV). At 150-182 (TVIKNIKVHHNNTSWLIQLEKRELLINYVFANM) the chain is on the extracellular side. 2 N-linked (GlcNAc...) asparagine glycosylation sites follow: asparagine 160 and asparagine 161. Residues 183–203 (GPISLFMVAVFTCFLLTISLW) form a helical membrane-spanning segment. Residues 204–233 (RHRRRMQSTGSKFRDLNTEVHVKAMKVLIS) lie on the Cytoplasmic side of the membrane. A helical membrane pass occupies residues 234–254 (FIILFILYFMGVLIETLCLFL). The Extracellular segment spans residues 255–257 (TEN). Residues 258–278 (ILLFIFGFTLSSTYPCCHSFI) form a helical membrane-spanning segment. At 279–302 (LILTSRELKQASMRALQRLKCCET) the chain is on the cytoplasmic side.

The protein belongs to the G-protein coupled receptor T2R family.

The protein localises to the membrane. Functionally, putative taste receptor which may play a role in the perception of bitterness. The protein is Taste receptor type 2 member 104 of Rattus norvegicus (Rat).